Reading from the N-terminus, the 303-residue chain is Cell wall mannoprotein HSP150 (303 aa).

An N-terminal signal peptide occupies residues 1-18 (MQYKKTLVASALAATTLA). A propeptide spanning residues 19–72 (AYAPSEPWSTLTPTATYSGGVTDYASTFGIAVQPISTTSSASSAATTASSKAKR) is cleaved from the precursor. PIR1/2/3 repeat units follow at residues 71 to 89 (KRAASQIGDGQVQAATTTA) and 97 to 113 (AAAVSQIGDGQIQATTK). The PIR1/2/3 3; degenerate repeat unit spans residues 114 to 134 (TTAAASLKLVMVKIQATTKTT). PIR1/2/3 repeat units lie at residues 135–153 (AAAVSQIGDGQVQATTKTT), 154–171 (AAAVSQITDGQVQATTKT), and 172–190 (TQAASQVSDGQVQATSATS).

The protein belongs to the PIR protein family. Post-translationally, covalently linked to beta-1,3-glucan of the inner cell wall layer via an alkali-sensitive ester linkage between the gamma-carboxyl group of glutamic acids, arising from specific glutamines within the PIR1/2/3 repeats, and hydroxyl groups of glucoses of beta-1,3-glucan chains. In terms of processing, the propeptide is cleaved off in the late Golgi. While both peptides are secreted, only a fraction of the mature glycoprotein is incorporated into the cell wall. O-glycosylated. Extensively O-mannosylated.

It is found in the secreted. It localises to the cell wall. Component of the outer cell wall layer. Required for stability of the cell wall and for optimal growth. Required for resistance against several antifungal and cell wall-perturbing agents and for tolerance to heat shock. The sequence is that of Cell wall mannoprotein HSP150 (HSP150) from Saccharomyces cerevisiae (strain AWRI1631) (Baker's yeast).